We begin with the raw amino-acid sequence, 280 residues long: MRLAFQLSYDGNQFRGSQLQPAYRTVEGELITACQRVQLFDDPCKAGFALAGRTDRGVHARGQVGAFSTPFPERAVEALNGQLSPDLWCNGFAEVPPSFHPRFDAISRTYRYFFADWPLDIRAMDQAAAALIGTHDFSRLARVREKSPIRTVKSARVFQDRGIPVFEVTAHTYLWHMVRCMAAALLLIGTHEREPELMERLLSGKCRRNPPAAPADGLVLWDVDCGVTFTPTEPDPRSRDWIGSARREAMVRERIIGLLDRSGVDRRGKEPGDDSGRDLL.

Asp55 serves as the catalytic Nucleophile. Tyr110 is a substrate binding site.

The protein belongs to the tRNA pseudouridine synthase TruA family.

It carries out the reaction uridine(38/39/40) in tRNA = pseudouridine(38/39/40) in tRNA. In terms of biological role, formation of pseudouridine at positions 38, 39 and 40 in the anticodon stem and loop of transfer RNAs. The protein is tRNA pseudouridine synthase A of Methanosphaerula palustris (strain ATCC BAA-1556 / DSM 19958 / E1-9c).